Consider the following 505-residue polypeptide: Lysine--tRNA ligase (505 aa).

Mg(2+)-binding residues include Glu-415 and Glu-422.

It belongs to the class-II aminoacyl-tRNA synthetase family. As to quaternary structure, homodimer. The cofactor is Mg(2+).

It is found in the cytoplasm. The enzyme catalyses tRNA(Lys) + L-lysine + ATP = L-lysyl-tRNA(Lys) + AMP + diphosphate. The polypeptide is Lysine--tRNA ligase (Salmonella arizonae (strain ATCC BAA-731 / CDC346-86 / RSK2980)).